Here is a 296-residue protein sequence, read N- to C-terminus: Morphine 6-dehydrogenase (296 aa).

13–22 serves as a coordination point for NADP(+); the sequence is GVKMPALGLG. Residue Y52 is the Proton donor of the active site. H110 serves as a coordination point for substrate.

The protein belongs to the aldo/keto reductase family. As to quaternary structure, monomer.

It carries out the reaction morphine + NAD(+) = morphinone + NADH + H(+). The enzyme catalyses morphine + NADP(+) = morphinone + NADPH + H(+). The protein operates within alkaloid degradation; codeine degradation. It participates in alkaloid degradation; morphine degradation. Its function is as follows. Oxidizes only the C-6 hydroxy group of morphine and codeine. The sequence is that of Morphine 6-dehydrogenase (morA) from Pseudomonas putida (Arthrobacter siderocapsulatus).